A 612-amino-acid polypeptide reads, in one-letter code: Threonine--tRNA ligase (612 aa).

Residues 218 to 509 (DHRKLGVELG…LSEHFGGNFP (292 aa)) are catalytic. Zn(2+)-binding residues include cysteine 310, histidine 361, and histidine 486.

It belongs to the class-II aminoacyl-tRNA synthetase family. In terms of assembly, homodimer. Zn(2+) serves as cofactor.

The protein resides in the cytoplasm. It carries out the reaction tRNA(Thr) + L-threonine + ATP = L-threonyl-tRNA(Thr) + AMP + diphosphate + H(+). In terms of biological role, catalyzes the attachment of threonine to tRNA(Thr) in a two-step reaction: L-threonine is first activated by ATP to form Thr-AMP and then transferred to the acceptor end of tRNA(Thr). Also edits incorrectly charged L-seryl-tRNA(Thr). This chain is Threonine--tRNA ligase, found in Helicobacter pylori (strain HPAG1).